Here is a 650-residue protein sequence, read N- to C-terminus: 1-deoxy-D-xylulose-5-phosphate synthase (650 aa).

Thiamine diphosphate is bound by residues H87 and G128–S130. D159 contributes to the Mg(2+) binding site. Residues G160–S161, N188, Y299, and E383 contribute to the thiamine diphosphate site. N188 contacts Mg(2+).

It belongs to the transketolase family. DXPS subfamily. In terms of assembly, homodimer. Requires Mg(2+) as cofactor. Thiamine diphosphate is required as a cofactor.

The enzyme catalyses D-glyceraldehyde 3-phosphate + pyruvate + H(+) = 1-deoxy-D-xylulose 5-phosphate + CO2. The protein operates within metabolic intermediate biosynthesis; 1-deoxy-D-xylulose 5-phosphate biosynthesis; 1-deoxy-D-xylulose 5-phosphate from D-glyceraldehyde 3-phosphate and pyruvate: step 1/1. Its function is as follows. Catalyzes the acyloin condensation reaction between C atoms 2 and 3 of pyruvate and glyceraldehyde 3-phosphate to yield 1-deoxy-D-xylulose-5-phosphate (DXP). In Syntrophus aciditrophicus (strain SB), this protein is 1-deoxy-D-xylulose-5-phosphate synthase.